The primary structure comprises 244 residues: Tegument protein UL51 (244 aa).

A lipid anchor (S-palmitoyl cysteine; by host) is attached at cysteine 9. The disordered stretch occupies residues 178-244 (GVTEAPSLGH…SRAAPCVLGQ (67 aa)). Residues 221 to 244 (PRPTASPTAPRPGPSRAAPCVLGQ) are compositionally biased toward low complexity.

It belongs to the herpesviridae UL51 family. In terms of assembly, oligomerizes. Interacts with UL7; this interaction mediates UL7 incorporation to virions. Interacts with UL14. Post-translationally, phosphorylated. In terms of processing, palmitoylation is necessary for Golgi localization.

It localises to the virion tegument. The protein resides in the host cytoplasm. It is found in the host Golgi apparatus. Plays several roles during the time course of infection, including egress of virus particles from the perinuclear space and secondary envelopment of cytoplasmic capsids that bud into specific trans-Golgi network (TGN)-derived membranes. Plays also an essential role in the maintenance of host cytoplasmic viral assembly center (cVAC) morphology in primary host neuronal cells. This Homo sapiens (Human) protein is Tegument protein UL51.